Consider the following 494-residue polypeptide: UPF0371 protein Sez_1293 (494 aa).

It belongs to the UPF0371 family.

This chain is UPF0371 protein Sez_1293, found in Streptococcus equi subsp. zooepidemicus (strain MGCS10565).